Here is a 1330-residue protein sequence, read N- to C-terminus: Fanconi anemia group I protein homolog (1330 aa).

Lysine 522 is covalently cross-linked (Glycyl lysine isopeptide (Lys-Gly) (interchain with G-Cter in ubiquitin)). Phosphoserine is present on serine 555. A Phosphothreonine modification is found at threonine 558. The residue at position 729 (serine 729) is a Phosphoserine. Threonine 948 carries the post-translational modification Phosphothreonine. The residue at position 1122 (serine 1122) is a Phosphoserine. The segment at 1299 to 1330 (EDEEDENEEGTASAHTQQDREPAKKRRKKCLS) is disordered. Basic residues predominate over residues 1321-1330 (AKKRRKKCLS).

This sequence belongs to the Fanconi anemia group I protein family. As to quaternary structure, homodimer. Part of a FANCI-FANCD2 heterodimeric complex that binds and scans dsDNA for DNA damage. Interacts with FANCL. Interacts with MTMR15/FAN1. Interacts with POLN. Interacts with UBL5; the interaction promotes FANCI homodimerization. Post-translationally, monoubiquitinated by FANCL on Lys-522 during S phase and upon genotoxic stress. Deubiquitinated by USP1 as cells enter G2/M, or once DNA repair is completed. Monoubiquitination requires the FANCA-FANCB-FANCC-FANCE-FANCF-FANCG-FANCM complex. Ubiquitination is required for binding to chromatin, DNA repair, and normal cell cycle progression. Monoubiquitination is stimulated by DNA-binding. In terms of processing, phosphorylated in response to DNA damage by ATM and/or ATR. Phosphorylation of FANCI promotes ubiquitination of FANCD2, which prevents DNA release from the FANCI-FANCD2 complex.

Its subcellular location is the nucleus. The protein localises to the cytoplasm. Plays an essential role in the repair of DNA double-strand breaks by homologous recombination and in the repair of interstrand DNA cross-links (ICLs) by promoting FANCD2 monoubiquitination by FANCL and participating in recruitment to DNA repair sites. The FANCI-FANCD2 complex binds and scans double-stranded DNA (dsDNA) for DNA damage; this complex stalls at DNA junctions between double-stranded DNA and single-stranded DNA. Participates in S phase and G2 phase checkpoint activation upon DNA damage. This Mus musculus (Mouse) protein is Fanconi anemia group I protein homolog (Fanci).